Reading from the N-terminus, the 289-residue chain is Putative transmembrane protein ORF289 (289 aa).

Topologically, residues 1-152 are extracellular; sequence MAIAKEFLLT…QYTSVVTFRT (152 aa). The chain crosses the membrane as a helical span at residues 153–173; it reads LVAPILYFFALFLVPAWSTVL. The Cytoplasmic segment spans residues 174-234; that stretch reads KQNPTFPQSQ…NGEVTSTQVN (61 aa). The chain crosses the membrane as a helical span at residues 235–255; the sequence is APIFIGVTTPSGVLVLAYNYY. Over 256-289 the chain is Extracellular; the sequence is SGTISKYVSLTVTTTYGSATVINQFETKTTGGTT.

It is found in the host membrane. The sequence is that of Putative transmembrane protein ORF289 from Acidianus sp. F28 (AFV-2).